Consider the following 493-residue polypeptide: ATP synthase subunit beta 3 (493 aa).

The interval 113 to 138 is disordered; the sequence is VPGDNGTPLPPGTPRRPIHRKPPPLA. 170–177 contributes to the ATP binding site; it reads GGAGVGKT.

This sequence belongs to the ATPase alpha/beta chains family. In terms of assembly, F-type ATPases have 2 components, CF(1) - the catalytic core - and CF(0) - the membrane proton channel. CF(1) has five subunits: alpha(3), beta(3), gamma(1), delta(1), epsilon(1). CF(0) has three main subunits: a(1), b(2) and c(9-12). The alpha and beta chains form an alternating ring which encloses part of the gamma chain. CF(1) is attached to CF(0) by a central stalk formed by the gamma and epsilon chains, while a peripheral stalk is formed by the delta and b chains.

The protein localises to the cell inner membrane. It catalyses the reaction ATP + H2O + 4 H(+)(in) = ADP + phosphate + 5 H(+)(out). In terms of biological role, produces ATP from ADP in the presence of a proton gradient across the membrane. The catalytic sites are hosted primarily by the beta subunits. This chain is ATP synthase subunit beta 3, found in Paraburkholderia xenovorans (strain LB400).